Here is a 183-residue protein sequence, read N- to C-terminus: ATP synthase subunit delta (183 aa).

It belongs to the ATPase delta chain family. As to quaternary structure, F-type ATPases have 2 components, F(1) - the catalytic core - and F(0) - the membrane proton channel. F(1) has five subunits: alpha(3), beta(3), gamma(1), delta(1), epsilon(1). F(0) has three main subunits: a(1), b(2) and c(10-14). The alpha and beta chains form an alternating ring which encloses part of the gamma chain. F(1) is attached to F(0) by a central stalk formed by the gamma and epsilon chains, while a peripheral stalk is formed by the delta and b chains.

The protein resides in the cell inner membrane. Its function is as follows. F(1)F(0) ATP synthase produces ATP from ADP in the presence of a proton or sodium gradient. F-type ATPases consist of two structural domains, F(1) containing the extramembraneous catalytic core and F(0) containing the membrane proton channel, linked together by a central stalk and a peripheral stalk. During catalysis, ATP synthesis in the catalytic domain of F(1) is coupled via a rotary mechanism of the central stalk subunits to proton translocation. Functionally, this protein is part of the stalk that links CF(0) to CF(1). It either transmits conformational changes from CF(0) to CF(1) or is implicated in proton conduction. The protein is ATP synthase subunit delta of Ehrlichia canis (strain Jake).